A 156-amino-acid chain; its full sequence is Small ribosomal subunit protein uS7 (156 aa).

It belongs to the universal ribosomal protein uS7 family. As to quaternary structure, part of the 30S ribosomal subunit. Contacts proteins S9 and S11.

In terms of biological role, one of the primary rRNA binding proteins, it binds directly to 16S rRNA where it nucleates assembly of the head domain of the 30S subunit. Is located at the subunit interface close to the decoding center, probably blocks exit of the E-site tRNA. The chain is Small ribosomal subunit protein uS7 from Salmonella agona (strain SL483).